We begin with the raw amino-acid sequence, 234 residues long: Uracil-DNA glycosylase (234 aa).

Asp68 functions as the Proton acceptor in the catalytic mechanism.

The protein belongs to the uracil-DNA glycosylase (UDG) superfamily. UNG family.

The protein resides in the cytoplasm. It catalyses the reaction Hydrolyzes single-stranded DNA or mismatched double-stranded DNA and polynucleotides, releasing free uracil.. In terms of biological role, excises uracil residues from the DNA which can arise as a result of misincorporation of dUMP residues by DNA polymerase or due to deamination of cytosine. This is Uracil-DNA glycosylase from Ruegeria sp. (strain TM1040) (Silicibacter sp.).